The following is a 160-amino-acid chain: Ribosomal RNA large subunit methyltransferase H (160 aa).

Residues leucine 76, glycine 108, and 127 to 132 each bind S-adenosyl-L-methionine; that span reads LGKMTW.

It belongs to the RNA methyltransferase RlmH family. Homodimer.

It localises to the cytoplasm. It carries out the reaction pseudouridine(1915) in 23S rRNA + S-adenosyl-L-methionine = N(3)-methylpseudouridine(1915) in 23S rRNA + S-adenosyl-L-homocysteine + H(+). In terms of biological role, specifically methylates the pseudouridine at position 1915 (m3Psi1915) in 23S rRNA. In Sinorhizobium fredii (strain NBRC 101917 / NGR234), this protein is Ribosomal RNA large subunit methyltransferase H.